Consider the following 304-residue polypeptide: Probable alpha-L-glutamate ligase 2 (304 aa).

The ATP-grasp domain occupies His-107 to Val-290. ATP contacts are provided by residues Lys-144, Glu-181–Phe-182, Asp-190, and Arg-214–Asn-216. The Mg(2+) site is built by Asp-251, Glu-263, and Asn-265. Residues Asp-251, Glu-263, and Asn-265 each coordinate Mn(2+).

It belongs to the RimK family. The cofactor is Mg(2+). Mn(2+) serves as cofactor.

The chain is Probable alpha-L-glutamate ligase 2 from Hahella chejuensis (strain KCTC 2396).